Consider the following 347-residue polypeptide: Phenylalanine--tRNA ligase alpha subunit (347 aa).

E261 contributes to the Mg(2+) binding site.

Belongs to the class-II aminoacyl-tRNA synthetase family. Phe-tRNA synthetase alpha subunit type 1 subfamily. In terms of assembly, tetramer of two alpha and two beta subunits. Mg(2+) is required as a cofactor.

Its subcellular location is the cytoplasm. It catalyses the reaction tRNA(Phe) + L-phenylalanine + ATP = L-phenylalanyl-tRNA(Phe) + AMP + diphosphate + H(+). The protein is Phenylalanine--tRNA ligase alpha subunit of Streptococcus thermophilus (strain ATCC BAA-491 / LMD-9).